A 324-amino-acid polypeptide reads, in one-letter code: Esterase FPSE_08126 (324 aa).

Catalysis depends on residues S156, D255, and H285.

The protein belongs to the AB hydrolase 3 family.

Functionally, esterase; part of the Fusarium detoxification of benzoxazolinone cluster involved in the degradation of benzoxazolinones produced by the host plant. Maize, wheat, and rye produce the 2 benzoxazinone phytoanticipins 2,4-dihy-droxy-7-methoxy-1,4-benzoxazin-3-one (DIMBOA) and 2,4-dihydroxy-1,4-benzoxazin-3-one (DIBOA) that, due to their inherent instability once released, spontaneously degrade to the more stable corresponding benzoxazolinones, 6-methoxy-2-benzoxazolinone (MBOA) and 2-benzoxazolinone (BOA), respectively. The first step in the detoxification of benzoxazolinones involves the hydrolysis of the cyclic ester bond of benzoxazolinones by the gamma-lactamase FDB1 to aminophenols. FDB1 is able to convert 2-benzoxazolinone (BOA) into 2-aminophenol (2-AP), as well as 6-methoxy-2-benzoxazolinone (MBOA) into 5-methoxy-2-aminophenol (2-AMP). The N-malonyltransferase FDB2 then metabolizes aminophenols via N-malonylation to non-toxic malonamic acids. FDB2 converts 2-AP into N-(2-hydroxyphenyl) malonamic acid (HPMA) and 2-AMP into N-(2-hydroxy-4-methoxyphenyl) malonamic acid (HMPMA). The cluster also contains 2 transcription factors (FDB3 and FPSE_08121), an aldo-keto reductase (FPSE_08125) that possibly associates with a ketone component of BOA and MBOA degradation, an esterase (FPSE_08126), an acyl-CoA transferase (FPSE_08120), a solute carrier protein (FPSE_08119) and a transmembrane transporter (FPSE_08127) proposed to shuttle metabolites of benzoxazolinone degradation. The sequence is that of Esterase FPSE_08126 from Fusarium pseudograminearum (strain CS3096) (Wheat and barley crown-rot fungus).